Reading from the N-terminus, the 376-residue chain is Carbamoyl phosphate synthase small chain (376 aa).

The segment at 1-184 (MKAILALADG…SEGYQQQTGE (184 aa)) is CPSase. Residues serine 45, glycine 236, and glycine 238 each contribute to the L-glutamine site. Positions 188-374 (KVVAYDFGIK…ADLMEKNRQS (187 aa)) constitute a Glutamine amidotransferase type-1 domain. Cysteine 263 functions as the Nucleophile in the catalytic mechanism. L-glutamine is bound by residues leucine 264, glutamine 267, asparagine 305, glycine 307, and phenylalanine 308. Active-site residues include histidine 347 and glutamate 349.

Belongs to the CarA family. Composed of two chains; the small (or glutamine) chain promotes the hydrolysis of glutamine to ammonia, which is used by the large (or ammonia) chain to synthesize carbamoyl phosphate. Tetramer of heterodimers (alpha,beta)4.

The catalysed reaction is hydrogencarbonate + L-glutamine + 2 ATP + H2O = carbamoyl phosphate + L-glutamate + 2 ADP + phosphate + 2 H(+). The enzyme catalyses L-glutamine + H2O = L-glutamate + NH4(+). The protein operates within amino-acid biosynthesis; L-arginine biosynthesis; carbamoyl phosphate from bicarbonate: step 1/1. It participates in pyrimidine metabolism; UMP biosynthesis via de novo pathway; (S)-dihydroorotate from bicarbonate: step 1/3. Small subunit of the glutamine-dependent carbamoyl phosphate synthetase (CPSase). CPSase catalyzes the formation of carbamoyl phosphate from the ammonia moiety of glutamine, carbonate, and phosphate donated by ATP, constituting the first step of 2 biosynthetic pathways, one leading to arginine and/or urea and the other to pyrimidine nucleotides. The small subunit (glutamine amidotransferase) binds and cleaves glutamine to supply the large subunit with the substrate ammonia. In Syntrophotalea carbinolica (strain DSM 2380 / NBRC 103641 / GraBd1) (Pelobacter carbinolicus), this protein is Carbamoyl phosphate synthase small chain.